Consider the following 143-residue polypeptide: Large ribosomal subunit protein uL15 (143 aa).

The disordered stretch occupies residues 1-54 (MELNSIKPADGAKHAARRVGRGIGSGLGKTAGRGHKGQKSRSGGYHKVGFEGGQ). Positions 21 to 31 (RGIGSGLGKTA) are enriched in gly residues.

The protein belongs to the universal ribosomal protein uL15 family. As to quaternary structure, part of the 50S ribosomal subunit.

In terms of biological role, binds to the 23S rRNA. This chain is Large ribosomal subunit protein uL15, found in Acidovorax ebreus (strain TPSY) (Diaphorobacter sp. (strain TPSY)).